The following is a 361-amino-acid chain: Ribosomal RNA large subunit methyltransferase M (361 aa).

Residues S186, 219 to 222 (CPGG), D238, D258, and D275 contribute to the S-adenosyl-L-methionine site. Catalysis depends on K304, which acts as the Proton acceptor.

It belongs to the class I-like SAM-binding methyltransferase superfamily. RNA methyltransferase RlmE family. RlmM subfamily. Monomer.

Its subcellular location is the cytoplasm. It catalyses the reaction cytidine(2498) in 23S rRNA + S-adenosyl-L-methionine = 2'-O-methylcytidine(2498) in 23S rRNA + S-adenosyl-L-homocysteine + H(+). Catalyzes the 2'-O-methylation at nucleotide C2498 in 23S rRNA. The sequence is that of Ribosomal RNA large subunit methyltransferase M from Pseudoalteromonas translucida (strain TAC 125).